A 303-amino-acid polypeptide reads, in one-letter code: Probable 5-dehydro-4-deoxyglucarate dehydratase (303 aa).

Belongs to the DapA family.

The catalysed reaction is 5-dehydro-4-deoxy-D-glucarate + H(+) = 2,5-dioxopentanoate + CO2 + H2O. Its pathway is carbohydrate acid metabolism; D-glucarate degradation; 2,5-dioxopentanoate from D-glucarate: step 2/2. This is Probable 5-dehydro-4-deoxyglucarate dehydratase from Pseudomonas syringae pv. tomato (strain ATCC BAA-871 / DC3000).